The sequence spans 220 residues: UPF0319 protein YccT (220 aa).

A signal peptide spans 1–20 (MKTGALATFLALCLPVTVFA).

Belongs to the UPF0319 family.

In Salmonella enteritidis PT4 (strain P125109), this protein is UPF0319 protein YccT.